The primary structure comprises 125 residues: Large ribosomal subunit protein bL12 (125 aa).

The protein belongs to the bacterial ribosomal protein bL12 family. As to quaternary structure, homodimer. Part of the ribosomal stalk of the 50S ribosomal subunit. Forms a multimeric L10(L12)X complex, where L10 forms an elongated spine to which 2 to 4 L12 dimers bind in a sequential fashion. Binds GTP-bound translation factors.

Its function is as follows. Forms part of the ribosomal stalk which helps the ribosome interact with GTP-bound translation factors. Is thus essential for accurate translation. This is Large ribosomal subunit protein bL12 from Thioalkalivibrio sulfidiphilus (strain HL-EbGR7).